A 206-amino-acid polypeptide reads, in one-letter code: dITP/XTP pyrophosphatase (206 aa).

A substrate-binding site is contributed by 10–15; that stretch reads SGNAGK. Mg(2+)-binding residues include glutamate 40 and aspartate 69. Aspartate 69 serves as the catalytic Proton acceptor. Residues serine 70, 148–151, lysine 171, and 176–177 each bind substrate; these read FGYD and HR.

Belongs to the HAM1 NTPase family. Homodimer. Requires Mg(2+) as cofactor.

The enzyme catalyses XTP + H2O = XMP + diphosphate + H(+). It catalyses the reaction dITP + H2O = dIMP + diphosphate + H(+). It carries out the reaction ITP + H2O = IMP + diphosphate + H(+). In terms of biological role, pyrophosphatase that catalyzes the hydrolysis of nucleoside triphosphates to their monophosphate derivatives, with a high preference for the non-canonical purine nucleotides XTP (xanthosine triphosphate), dITP (deoxyinosine triphosphate) and ITP. Seems to function as a house-cleaning enzyme that removes non-canonical purine nucleotides from the nucleotide pool, thus preventing their incorporation into DNA/RNA and avoiding chromosomal lesions. This is dITP/XTP pyrophosphatase from Synechococcus sp. (strain CC9311).